The primary structure comprises 97 residues: Mapk-regulated corepressor-interacting protein 1 (97 aa).

The segment covering 1–26 (MTSSSTPRMHTYKRTSSPRSPTNTGE) has biased composition (polar residues). Disordered stretches follow at residues 1–27 (MTSSSTPRMHTYKRTSSPRSPTNTGEL) and 54–97 (QNHE…SKKS). Basic and acidic residues-rich tracts occupy residues 54–68 (QNHERNDRGPQEYVE) and 84–97 (SDLKKRNTQDSKKS). Residues 80–84 (PVDLS) carry the PXDLS motif motif.

The protein belongs to the MCRIP family.

Its subcellular location is the nucleus. It is found in the cytoplasm. The protein localises to the stress granule. Functionally, may play a role in the regulation of the epithelial-mesenchymal transition. The sequence is that of Mapk-regulated corepressor-interacting protein 1 (mcrip1) from Danio rerio (Zebrafish).